A 368-amino-acid polypeptide reads, in one-letter code: Chaperone protein DnaJ (368 aa).

The 65-residue stretch at 5–69 folds into the J domain; that stretch reads DYYEVLGLSQ…QKRAQYDQFG (65 aa). Residues 130 to 212 form a CR-type zinc finger; that stretch reads GKELNVEIPV…CHGSGKVRKR (83 aa). Zn(2+) is bound by residues Cys-143, Cys-146, Cys-160, Cys-163, Cys-186, Cys-189, Cys-200, and Cys-203. CXXCXGXG motif repeat units follow at residues 143-150, 160-167, 186-193, and 200-207; these read CDTCKGSG, CKHCSGSG, CGHCSGTG, and CTTCHGSG.

This sequence belongs to the DnaJ family. As to quaternary structure, homodimer. It depends on Zn(2+) as a cofactor.

Its subcellular location is the cytoplasm. Functionally, participates actively in the response to hyperosmotic and heat shock by preventing the aggregation of stress-denatured proteins and by disaggregating proteins, also in an autonomous, DnaK-independent fashion. Unfolded proteins bind initially to DnaJ; upon interaction with the DnaJ-bound protein, DnaK hydrolyzes its bound ATP, resulting in the formation of a stable complex. GrpE releases ADP from DnaK; ATP binding to DnaK triggers the release of the substrate protein, thus completing the reaction cycle. Several rounds of ATP-dependent interactions between DnaJ, DnaK and GrpE are required for fully efficient folding. Also involved, together with DnaK and GrpE, in the DNA replication of plasmids through activation of initiation proteins. This chain is Chaperone protein DnaJ, found in Bacillus mycoides (strain KBAB4) (Bacillus weihenstephanensis).